A 1257-amino-acid polypeptide reads, in one-letter code: LIM domain kinase 1 (1257 aa).

The segment at M1–P24 is disordered. Residues M1–C147 form an interaction with LATS1 region. Residues G11–P24 show a composition bias toward gly residues. LIM zinc-binding domains follow at residues P31–D93 and A94–Q154. Residues L174–P274 enclose the PDZ domain. A Protein kinase domain is found at L401–L686. ATP is bound by residues L407–V415 and K430. The active site involves D522. Disordered regions lie at residues L552–R587, Q759–L811, and E881–R900. Over residues Q794 to L811 the composition is skewed to basic and acidic residues. S1000 is subject to Phosphoserine. Disordered stretches follow at residues A1010–L1037, S1085–H1182, and A1212–C1257. 2 stretches are compositionally biased toward polar residues: residues S1085–H1095 and R1113–V1125. Composition is skewed to low complexity over residues S1126 to T1137 and T1145 to Q1166.

The protein belongs to the protein kinase superfamily. TKL Ser/Thr protein kinase family. In terms of assembly, interacts with LATS1, and this interaction inhibits phosphorylation of tsr/cofilin. Post-translationally, phosphorylated on serine and/or threonine residues by ROCK1. Phosphorylated by PAK4 resulting in increased LIMK1 ability to phosphorylate cofilin. May be dephosphorylated and inactivated by SSH1. In terms of tissue distribution, expressed throughout the imaginal disks of the eye, leg and wing.

Its subcellular location is the cytoplasm. It is found in the cleavage furrow. The protein resides in the midbody. It catalyses the reaction L-seryl-[protein] + ATP = O-phospho-L-seryl-[protein] + ADP + H(+). It carries out the reaction L-threonyl-[protein] + ATP = O-phospho-L-threonyl-[protein] + ADP + H(+). In terms of biological role, protein kinase which regulates actin filament dynamics. Phosphorylates and inactivates the actin binding/depolymerizing factor tsr/cofilin, thereby stabilizing the actin cytoskeleton. Modulation of actin cytoskeleton dynamics may be essential for imaginal disk morphogenesis and axon guidance. This chain is LIM domain kinase 1 (LIMK1), found in Drosophila melanogaster (Fruit fly).